The sequence spans 419 residues: Carboxypeptidase A1 (419 aa).

A signal peptide spans 1–16; that stretch reads MRGLLVLSVLLGAVFG. A propeptide spans 17-110 (activation peptide); that stretch reads KEDFVGHQVL…QEQMFAFRSR (94 aa). The Peptidase M14 domain maps to 121–414; sequence TYHTLEEIYD…LALLTIMEHT (294 aa). The Zn(2+) site is built by His-179 and Glu-182. Substrate is bound by residues 179–182, Arg-237, and 254–255; these read HSRE and NR. Cysteines 248 and 271 form a disulfide. His-306 lines the Zn(2+) pocket. Substrate-binding positions include 307-308 and Tyr-358; that span reads SY. The active-site Proton donor/acceptor is Glu-380.

It belongs to the peptidase M14 family. As to quaternary structure, monomer. May form a complex with proelastase 2. Zn(2+) is required as a cofactor.

It localises to the secreted. It carries out the reaction Release of a C-terminal amino acid, but little or no action with -Asp, -Glu, -Arg, -Lys or -Pro.. The enzyme catalyses leukotriene C4 + H2O = leukotriene F4 + glycine. Its activity is regulated as follows. Inhibited by interaction with the S.magnifica carboxypeptidase inhibitor SmCI. Its function is as follows. Carboxypeptidase that catalyzes the release of a C-terminal amino acid, but has little or no action with -Asp, -Glu, -Arg, -Lys or -Pro. Catalyzes the conversion of leukotriene C4 to leukotriene F4 via the hydrolysis of an amide bond. The polypeptide is Carboxypeptidase A1 (Homo sapiens (Human)).